A 158-amino-acid polypeptide reads, in one-letter code: NAD(P)H-quinone oxidoreductase subunit N (158 aa).

The protein belongs to the complex I NdhN subunit family. NDH-1 can be composed of about 15 different subunits; different subcomplexes with different compositions have been identified which probably have different functions.

The protein localises to the cellular thylakoid membrane. It carries out the reaction a plastoquinone + NADH + (n+1) H(+)(in) = a plastoquinol + NAD(+) + n H(+)(out). It catalyses the reaction a plastoquinone + NADPH + (n+1) H(+)(in) = a plastoquinol + NADP(+) + n H(+)(out). NDH-1 shuttles electrons from an unknown electron donor, via FMN and iron-sulfur (Fe-S) centers, to quinones in the respiratory and/or the photosynthetic chain. The immediate electron acceptor for the enzyme in this species is believed to be plastoquinone. Couples the redox reaction to proton translocation, and thus conserves the redox energy in a proton gradient. Cyanobacterial NDH-1 also plays a role in inorganic carbon-concentration. In Prochlorococcus marinus (strain MIT 9301), this protein is NAD(P)H-quinone oxidoreductase subunit N.